A 67-amino-acid polypeptide reads, in one-letter code: Large ribosomal subunit protein bL35 (67 aa).

Residues 1-32 (MPKLKNHSGAKKRFAKTATGKYKRRKAGRKHL) are compositionally biased toward basic residues. The tract at residues 1–54 (MPKLKNHSGAKKRFAKTATGKYKRRKAGRKHLLTPQSGSRKREMRQTGIIKPES) is disordered.

This sequence belongs to the bacterial ribosomal protein bL35 family.

In Elusimicrobium minutum (strain Pei191), this protein is Large ribosomal subunit protein bL35.